Reading from the N-terminus, the 95-residue chain is Feather keratin B-4 (95 aa).

N-acetylserine is present on Ser-1.

The protein belongs to the avian keratin family. The avian keratins (F-ker, S-ker, C-ker and B-ker) are a complex mixture of very similar polypeptides.

The sequence is that of Feather keratin B-4 from Columba livia (Rock dove).